The chain runs to 96 residues: Protein RnfH (96 aa).

The protein belongs to the UPF0125 (RnfH) family.

The chain is Protein RnfH from Pectobacterium carotovorum subsp. carotovorum (strain PC1).